The chain runs to 520 residues: 2-isopropylmalate synthase (520 aa).

Positions 12 to 274 constitute a Pyruvate carboxyltransferase domain; sequence IRIFDTTLRD…DSAINTPRIV (263 aa). Positions 21, 209, 211, and 245 each coordinate Mn(2+). The interval 396-520 is regulatory domain; that stretch reads RLASMTISDV…VIAGKTAAVA (125 aa).

The protein belongs to the alpha-IPM synthase/homocitrate synthase family. LeuA type 1 subfamily. As to quaternary structure, homodimer. It depends on Mn(2+) as a cofactor.

It localises to the cytoplasm. It catalyses the reaction 3-methyl-2-oxobutanoate + acetyl-CoA + H2O = (2S)-2-isopropylmalate + CoA + H(+). It functions in the pathway amino-acid biosynthesis; L-leucine biosynthesis; L-leucine from 3-methyl-2-oxobutanoate: step 1/4. Catalyzes the condensation of the acetyl group of acetyl-CoA with 3-methyl-2-oxobutanoate (2-ketoisovalerate) to form 3-carboxy-3-hydroxy-4-methylpentanoate (2-isopropylmalate). This Xanthomonas oryzae pv. oryzae (strain KACC10331 / KXO85) protein is 2-isopropylmalate synthase.